Here is a 675-residue protein sequence, read N- to C-terminus: Vitamin K-dependent protein S (675 aa).

A signal peptide spans 1–24; that stretch reads MRVLGGRTGTLLACLALVLPVLEA. A propeptide spanning residues 25–41 is cleaved from the precursor; the sequence is NFLSRQHASQVLIRRRR. Residues 42–87 form the Gla domain; sequence ANTLLEETKKGNLERECIEELCNKEEAREIFENNPETEYFYPKYLG. 11 positions are modified to 4-carboxyglutamate: glutamate 47, glutamate 48, glutamate 55, glutamate 57, glutamate 60, glutamate 61, glutamate 66, glutamate 67, glutamate 70, glutamate 73, and glutamate 77. A disulfide bridge links cysteine 58 with cysteine 63. 16 disulfide bridges follow: cysteine 88–cysteine 113, cysteine 121–cysteine 134, cysteine 126–cysteine 143, cysteine 145–cysteine 154, cysteine 161–cysteine 175, cysteine 171–cysteine 184, cysteine 186–cysteine 199, cysteine 205–cysteine 217, cysteine 212–cysteine 226, cysteine 228–cysteine 241, cysteine 247–cysteine 256, cysteine 252–cysteine 265, cysteine 267–cysteine 282, cysteine 288–cysteine 567, cysteine 449–cysteine 475, and cysteine 638–cysteine 665. The thrombin-sensitive stretch occupies residues 88–116; it reads CLGSFRAGLFTAARLSTNAYPDLRSCVNA. The EGF-like 1 domain maps to 117–155; that stretch reads ISDQCNPLPCNEDGFMTCKDGQATFTCICKSGWQGEKCE. (3R)-3-hydroxyaspartate is present on aspartate 136. The EGF-like 2; calcium-binding domain occupies 157–200; the sequence is DINECKDPVNINGGCSQICENTPGSYHCSCKNGFVMLSNKKDCK. Asparagine 177 is subject to (3R)-3-hydroxyasparagine. An EGF-like 3; calcium-binding domain is found at 201-242; the sequence is DVDECVLKPSICGTAVCKNIPGDFECECAEGYKYNPVSKSCD. At asparagine 219 the chain carries (3R)-3-hydroxyasparagine. The region spanning 243–283 is the EGF-like 4; calcium-binding domain; it reads DVDECAENLCAQLCVNYPGGYSCYCDGKKGFKLAQDQKSCE. (3R)-3-hydroxyasparagine is present on asparagine 258. 2 Laminin G-like domains span residues 299-475 and 484-665; these read LLYL…NKHC and YYPG…AHSC. Asparagine 499 and asparagine 509 each carry an N-linked (GlcNAc...) asparagine glycan.

Post-translationally, the iron and 2-oxoglutarate dependent 3-hydroxylation of aspartate and asparagine is (R) stereospecific within EGF domains. As to expression, plasma.

It is found in the secreted. Its function is as follows. Anticoagulant plasma protein; it is a cofactor to activated protein C in the degradation of coagulation factors Va and VIIIa. It helps to prevent coagulation and stimulating fibrinolysis. The sequence is that of Vitamin K-dependent protein S (PROS1) from Bos taurus (Bovine).